A 727-amino-acid chain; its full sequence is Synaptic vesicle glycoprotein 2C (727 aa).

Positions M1–D57 are interaction with SYT1. Residues M1 to L154 are Cytoplasmic-facing. Disordered stretches follow at residues K24 to E84 and V109 to R128. Residues S75 and S76 each carry the phosphoserine modification. T79 is modified (phosphothreonine). Residues K113 to R128 are compositionally biased toward basic and acidic residues. Residues F155–V175 traverse the membrane as a helical segment. The Extracellular segment spans residues L176–G191. The chain crosses the membrane as a helical span at residues W192 to A212. At D213 to S226 the chain is on the cytoplasmic side. The chain crosses the membrane as a helical span at residues V227 to C247. Residue R248 is a topological domain, extracellular. A helical transmembrane segment spans residues L249–V269. At L270–S280 the chain is on the cytoplasmic side. Residues W281–I301 form a helical membrane-spanning segment. The Extracellular portion of the chain corresponds to P302–R320. A helical transmembrane segment spans residues V321–P341. Topologically, residues E342–T437 are cytoplasmic. A helical transmembrane segment spans residues I438 to I458. Topologically, residues K459–S578 are extracellular. Phosphotyrosine is present on Y466. Residues N480, N484, N534, N559, and N565 are each glycosylated (N-linked (GlcNAc...) asparagine). Positions S519 to F563 are (Microbial infection) C.botulinum neurotoxin type A-binding. The helical transmembrane segment at A579–V599 threads the bilayer. At S600–R609 the chain is on the cytoplasmic side. Residues L610 to G630 traverse the membrane as a helical segment. Residues T631 to M636 are Extracellular-facing. The chain crosses the membrane as a helical span at residues I637 to V657. The Cytoplasmic segment spans residues T658–T669. A helical membrane pass occupies residues G670–G690. Residues S691–S698 are Extracellular-facing. The helical transmembrane segment at I699–P719 threads the bilayer. Topologically, residues D720 to M727 are cytoplasmic.

Belongs to the major facilitator superfamily. Interacts with SYT1 in a calcium-dependent manner. As to quaternary structure, (Microbial infection) Interacts with C.botulinum neurotoxin type A1 and type A2 (BoNT/A, botA). Interaction is improved by glycosylation of SV2. In terms of processing, N-glycosylated. Upon expression in a kidney cell line the most abundant glycan on Asn-534 is GlcNAc(3)Hex(5), while on Asn-559 and Asn-565 the most abundant glycan is GlcNAc2Fuc1Man3GlcNAc3Gal3. Both Asn-559 and Asn-565 have a high degree of glycan heterogeneity.

It is found in the cytoplasmic vesicle. It localises to the secretory vesicle. Its subcellular location is the synaptic vesicle membrane. Functionally, plays a role in the control of regulated secretion in neural and endocrine cells, enhancing selectively low-frequency neurotransmission. Positively regulates vesicle fusion by maintaining the readily releasable pool of secretory vesicles. In terms of biological role, (Microbial infection) Receptor for C.botulinum neurotoxin type A (BoNT/A, botA); the toxin probably binds via extracellular loop 4. Recognition by BoNT/A relies on both protein-protein and protein-N-glycosylation; glycosylation of Asn-559 increases its affinity for BoNT/A. Also serves as a receptor for the closely related C.botulinum neurotoxin type A2; glycosylation is not essential but enhances the interaction. Its function is as follows. (Microbial infection) Possible receptor for C.botulinum neurotoxin type D (BoNT/D, botD); note that type D does not usually infect humans. This is Synaptic vesicle glycoprotein 2C (SV2C) from Homo sapiens (Human).